Reading from the N-terminus, the 650-residue chain is Macrolide export ATP-binding/permease protein MacB (650 aa).

The 239-residue stretch at 5–243 (LELKDIRRSY…AGGTEPVVNT (239 aa)) folds into the ABC transporter domain. An ATP-binding site is contributed by 41-48 (GASGSGKS). The next 5 membrane-spanning stretches (helical) occupy residues 273-293 (LLTM…VVVG), 523-543 (LFLT…VMNI), 554-574 (ANDI…HLFF), 580-600 (VLPA…AFTL), and 613-633 (PLAL…FGWL).

The protein belongs to the ABC transporter superfamily. Macrolide exporter (TC 3.A.1.122) family. In terms of assembly, homodimer. Part of the tripartite efflux system MacAB-TolC, which is composed of an inner membrane transporter, MacB, a periplasmic membrane fusion protein, MacA, and an outer membrane component, TolC. The complex forms a large protein conduit and can translocate molecules across both the inner and outer membranes. Interacts with MacA.

The protein localises to the cell inner membrane. Functionally, part of the tripartite efflux system MacAB-TolC. MacB is a non-canonical ABC transporter that contains transmembrane domains (TMD), which form a pore in the inner membrane, and an ATP-binding domain (NBD), which is responsible for energy generation. Confers resistance against macrolides. The polypeptide is Macrolide export ATP-binding/permease protein MacB (Shigella dysenteriae serotype 1 (strain Sd197)).